Reading from the N-terminus, the 289-residue chain is Serine/threonine-protein phosphatase Pgam5, mitochondrial (289 aa).

A helical transmembrane segment spans residues phenylalanine 7–leucine 23.

Belongs to the phosphoglycerate mutase family. BPG-dependent PGAM subfamily. As to quaternary structure, interacts with Pk92B/ASK1.

Its subcellular location is the mitochondrion outer membrane. The enzyme catalyses O-phospho-L-seryl-[protein] + H2O = L-seryl-[protein] + phosphate. It catalyses the reaction O-phospho-L-threonyl-[protein] + H2O = L-threonyl-[protein] + phosphate. In terms of biological role, displays phosphatase activity for serine/threonine residues, and dephosphorylates and activates Pk92B kinase. Has apparently no phosphoglycerate mutase activity. The chain is Serine/threonine-protein phosphatase Pgam5, mitochondrial from Drosophila virilis (Fruit fly).